Here is a 668-residue protein sequence, read N- to C-terminus: tRNA 5-methylaminomethyl-2-thiouridine biosynthesis bifunctional protein MnmC (668 aa).

A tRNA (mnm(5)s(2)U34)-methyltransferase region spans residues Met1 to Glu245. The FAD-dependent cmnm(5)s(2)U34 oxidoreductase stretch occupies residues Ile270–Gly668.

This sequence in the N-terminal section; belongs to the methyltransferase superfamily. tRNA (mnm(5)s(2)U34)-methyltransferase family. In the C-terminal section; belongs to the DAO family. It depends on FAD as a cofactor.

It localises to the cytoplasm. The catalysed reaction is 5-aminomethyl-2-thiouridine(34) in tRNA + S-adenosyl-L-methionine = 5-methylaminomethyl-2-thiouridine(34) in tRNA + S-adenosyl-L-homocysteine + H(+). In terms of biological role, catalyzes the last two steps in the biosynthesis of 5-methylaminomethyl-2-thiouridine (mnm(5)s(2)U) at the wobble position (U34) in tRNA. Catalyzes the FAD-dependent demodification of cmnm(5)s(2)U34 to nm(5)s(2)U34, followed by the transfer of a methyl group from S-adenosyl-L-methionine to nm(5)s(2)U34, to form mnm(5)s(2)U34. This chain is tRNA 5-methylaminomethyl-2-thiouridine biosynthesis bifunctional protein MnmC, found in Escherichia coli (strain K12 / DH10B).